We begin with the raw amino-acid sequence, 376 residues long: 26S proteasome non-ATPase regulatory subunit 13 (376 aa).

Residues 171–338 enclose the PCI domain; sequence SYYKDALRFL…KRVHMTWVQP (168 aa).

It belongs to the proteasome subunit S11 family. As to quaternary structure, component of the 19S proteasome regulatory particle complex. The 26S proteasome consists of a 20S core particle (CP) and two 19S regulatory subunits (RP). The regulatory particle is made of a lid composed of 9 subunits including PSMD13, a base containing 6 ATPases and few additional components.

In terms of biological role, component of the 26S proteasome, a multiprotein complex involved in the ATP-dependent degradation of ubiquitinated proteins. This complex plays a key role in the maintenance of protein homeostasis by removing misfolded or damaged proteins, which could impair cellular functions, and by removing proteins whose functions are no longer required. Therefore, the proteasome participates in numerous cellular processes, including cell cycle progression, apoptosis, or DNA damage repair. This is 26S proteasome non-ATPase regulatory subunit 13 (PSMD13) from Bos taurus (Bovine).